We begin with the raw amino-acid sequence, 186 residues long: Ribosome-recycling factor (186 aa).

Belongs to the RRF family.

It is found in the cytoplasm. Functionally, responsible for the release of ribosomes from messenger RNA at the termination of protein biosynthesis. May increase the efficiency of translation by recycling ribosomes from one round of translation to another. In Chlorobium phaeovibrioides (strain DSM 265 / 1930) (Prosthecochloris vibrioformis (strain DSM 265)), this protein is Ribosome-recycling factor.